Consider the following 81-residue polypeptide: Photosystem I iron-sulfur center (81 aa).

2 consecutive 4Fe-4S ferredoxin-type domains span residues 2 to 31 and 39 to 68; these read AHSVKIYDTCIGCTQCVRACPTDVLEMIPW and IASAPRTEDCVGCKRCESACPTDFLSVRVY. Cys11, Cys14, Cys17, Cys21, Cys48, Cys51, Cys54, and Cys58 together coordinate [4Fe-4S] cluster.

The eukaryotic PSI reaction center is composed of at least 11 subunits. [4Fe-4S] cluster is required as a cofactor.

It localises to the plastid. It is found in the chloroplast thylakoid membrane. It catalyses the reaction reduced [plastocyanin] + hnu + oxidized [2Fe-2S]-[ferredoxin] = oxidized [plastocyanin] + reduced [2Fe-2S]-[ferredoxin]. Functionally, apoprotein for the two 4Fe-4S centers FA and FB of photosystem I (PSI); essential for photochemical activity. FB is the terminal electron acceptor of PSI, donating electrons to ferredoxin. The C-terminus interacts with PsaA/B/D and helps assemble the protein into the PSI complex. Required for binding of PsaD and PsaE to PSI. PSI is a plastocyanin-ferredoxin oxidoreductase, converting photonic excitation into a charge separation, which transfers an electron from the donor P700 chlorophyll pair to the spectroscopically characterized acceptors A0, A1, FX, FA and FB in turn. This Psilotum nudum (Whisk fern) protein is Photosystem I iron-sulfur center.